The chain runs to 178 residues: Large ribosomal subunit protein uL6 (178 aa).

It belongs to the universal ribosomal protein uL6 family. In terms of assembly, part of the 50S ribosomal subunit.

Functionally, this protein binds to the 23S rRNA, and is important in its secondary structure. It is located near the subunit interface in the base of the L7/L12 stalk, and near the tRNA binding site of the peptidyltransferase center. The polypeptide is Large ribosomal subunit protein uL6 (Coxiella burnetii (strain CbuK_Q154) (Coxiella burnetii (strain Q154))).